We begin with the raw amino-acid sequence, 67 residues long: UPF0434 protein Bphy_0537 (67 aa).

The protein belongs to the UPF0434 family.

The chain is UPF0434 protein Bphy_0537 from Paraburkholderia phymatum (strain DSM 17167 / CIP 108236 / LMG 21445 / STM815) (Burkholderia phymatum).